A 442-amino-acid polypeptide reads, in one-letter code: Transcription factor MYCFIDRAFT_198930 (442 aa).

A disordered region spans residues 1 to 34 (MSTTPMAAPPGADLKPVTSSRGRSSTSDEQKLRS). A DNA-binding region (zn(2)-C6 fungal-type) is located at residues 36–63 (CESCAQSKLKCSGDKPACARCAKRGLAC). Residues 74 to 107 (KPKGYTSTNDNNPSKRREDSHSPAASQWSSTGHL) are disordered. Residues 96–107 (PAASQWSSTGHL) are compositionally biased toward polar residues.

It localises to the nucleus. Functionally, transcription factor that positively regulates the expression of the gene cluster that mediates the biosynthesis of an emodin derivative that may be involved in black Sigatoka disease of banana. In Pseudocercospora fijiensis (strain CIRAD86) (Black leaf streak disease fungus), this protein is Transcription factor MYCFIDRAFT_198930.